Reading from the N-terminus, the 662-residue chain is Interleukin-12 receptor subunit beta-1 (662 aa).

The first 23 residues, 1 to 23, serve as a signal peptide directing secretion; sequence MEPLVTWVVPLLFLFLLSRQGAA. The Extracellular segment spans residues 24-545; that stretch reads CRTSECCFQD…RFSIEVQVSD (522 aa). 5 Fibronectin type-III domains span residues 46-136, 142-234, 237-337, 338-444, and 448-542; these read GPRD…LYNS, PLGD…VPPE, PQPQ…IPAD, THTE…GNAS, and TPHH…IEVQ. The cysteines at positions 52 and 62 are disulfide-linked. Asparagine 121 is a glycosylation site (N-linked (GlcNAc...) asparagine). Positions 222–226 match the WSXWS motif motif; it reads WSKWS. N-linked (GlcNAc...) asparagine glycans are attached at residues asparagine 329, asparagine 346, asparagine 352, asparagine 442, and asparagine 456. A helical membrane pass occupies residues 546–570; the sequence is WLIFFASLGSFLSILLVGVLGYLGL. The Cytoplasmic segment spans residues 571-662; the sequence is NRAARHLCPP…EDGDRCKAKM (92 aa). Residues 577 to 585 carry the Box 1 motif motif; the sequence is LCPPLPTPC. Residues 626 to 637 are compositionally biased toward basic and acidic residues; it reads GERTEPLEKTEL. Residues 626–648 form a disordered region; that stretch reads GERTEPLEKTELPEGAPELALDT.

This sequence belongs to the type I cytokine receptor family. Type 2 subfamily. In terms of assembly, dimer or oligomer; disulfide-linked. Interacts with IL12RB2 to form the high affinity IL12 receptor. Heterodimer with IL23R; in presence of IL23. The heterodimer forms the IL23 receptor.

It is found in the membrane. Functions as an interleukin receptor which binds interleukin-12 with low affinity and is involved in IL12 transduction. Associated with IL12RB2 it forms a functional, high affinity receptor for IL12. Also associates with IL23R to form the interleukin-23 receptor which functions in IL23 signal transduction probably through activation of the Jak-Stat signaling cascade. The polypeptide is Interleukin-12 receptor subunit beta-1 (IL12RB1) (Homo sapiens (Human)).